A 387-amino-acid polypeptide reads, in one-letter code: 3-ketoacyl-CoA thiolase (387 aa).

The active-site Acyl-thioester intermediate is the cysteine 91. Active-site proton acceptor residues include histidine 343 and cysteine 373.

This sequence belongs to the thiolase-like superfamily. Thiolase family. As to quaternary structure, heterotetramer of two alpha chains (FadB) and two beta chains (FadA).

The protein resides in the cytoplasm. The enzyme catalyses an acyl-CoA + acetyl-CoA = a 3-oxoacyl-CoA + CoA. It functions in the pathway lipid metabolism; fatty acid beta-oxidation. In terms of biological role, catalyzes the final step of fatty acid oxidation in which acetyl-CoA is released and the CoA ester of a fatty acid two carbons shorter is formed. The polypeptide is 3-ketoacyl-CoA thiolase (Cronobacter sakazakii (strain ATCC BAA-894) (Enterobacter sakazakii)).